The sequence spans 208 residues: ATP phosphoribosyltransferase (208 aa).

It belongs to the ATP phosphoribosyltransferase family. Short subfamily. Heteromultimer composed of HisG and HisZ subunits.

It localises to the cytoplasm. The enzyme catalyses 1-(5-phospho-beta-D-ribosyl)-ATP + diphosphate = 5-phospho-alpha-D-ribose 1-diphosphate + ATP. Its pathway is amino-acid biosynthesis; L-histidine biosynthesis; L-histidine from 5-phospho-alpha-D-ribose 1-diphosphate: step 1/9. Catalyzes the condensation of ATP and 5-phosphoribose 1-diphosphate to form N'-(5'-phosphoribosyl)-ATP (PR-ATP). Has a crucial role in the pathway because the rate of histidine biosynthesis seems to be controlled primarily by regulation of HisG enzymatic activity. This Hydrogenovibrio crunogenus (strain DSM 25203 / XCL-2) (Thiomicrospira crunogena) protein is ATP phosphoribosyltransferase.